The primary structure comprises 403 residues: D-galactonate dehydratase family member RspA (403 aa).

Positions 37 and 122 each coordinate substrate. Residue Tyr-159 is the Proton donor/acceptor of the active site. Asp-211 contacts Mg(2+). The active-site Proton donor/acceptor is His-213. Positions 237 and 263 each coordinate Mg(2+). Residues Glu-263, Arg-284, His-313, Asp-317, and Glu-340 each coordinate substrate.

The protein belongs to the mandelate racemase/muconate lactonizing enzyme family. GalD subfamily. It depends on Mg(2+) as a cofactor.

The catalysed reaction is D-mannonate = 2-dehydro-3-deoxy-D-gluconate + H2O. It catalyses the reaction D-gluconate = 2-dehydro-3-deoxy-D-gluconate + H2O. Has low dehydratase activity with D-mannonate and D-gluconate, suggesting that these are not physiological substrates and that it has no significant role in the in vivo degradation of these compounds. Has no detectable activity with a panel of 70 other acid sugars (in vitro). In Halomonas elongata (strain ATCC 33173 / DSM 2581 / NBRC 15536 / NCIMB 2198 / 1H9), this protein is D-galactonate dehydratase family member RspA (rspA).